The chain runs to 823 residues: Nuclear factor I family protein (823 aa).

Positions 1–56 (MEPHLKIDVSSASGSTTTGATASTSEAPQDSQAQQTMPPPSSDWSNQFNSPEAVSP) are disordered. The segment covering 10-25 (SSASGSTTTGATASTS) has biased composition (low complexity). Positions 26–52 (EAPQDSQAQQTMPPPSSDWSNQFNSPE) are enriched in polar residues. The CTF/NF-I DNA-binding region spans 61-253 (IKCFSPYSQE…DVDTKITLTY (193 aa)). 3 disordered regions span residues 364–408 (PYPI…NDEV), 433–468 (SRTQ…AFRS), and 777–823 (APPA…NEKK). Positions 386-396 (PSEKRSRDISS) are enriched in basic and acidic residues. Residues 433–447 (SRTQQNQGAPGTSRQ) are compositionally biased toward polar residues. The span at 777 to 794 (APPACSPSSSNSSLGAAN) shows a compositional bias: low complexity.

Belongs to the CTF/NF-I family. In terms of tissue distribution, expressed in muscles, neurons and intestinal cells.

It is found in the nucleus. Probable transcription factor which recognizes and binds the palindromic sequence 5'-TTGGCANNNTGCCAA-3' present in promoters. Plays a role in locomotion, pharyngeal pumping, egg-laying, and life span. The chain is Nuclear factor I family protein from Caenorhabditis elegans.